A 463-amino-acid polypeptide reads, in one-letter code: ATP sulfurylase 1, chloroplastic (463 aa).

The transit peptide at 1–48 (MASMAAVLSKTPFLSQPLTKSSPNSDLPFAAVSFPSKSLRRRVGSIRA) directs the protein to the chloroplast.

This sequence belongs to the sulfate adenylyltransferase family. Homotetramer.

It localises to the plastid. The protein localises to the chloroplast stroma. It carries out the reaction sulfate + ATP + H(+) = adenosine 5'-phosphosulfate + diphosphate. The protein operates within sulfur metabolism; hydrogen sulfide biosynthesis; sulfite from sulfate: step 1/3. Its function is as follows. Mediates selenate (Se) reduction, and promotes Se and sulfur (S) uptake and assimilation. The polypeptide is ATP sulfurylase 1, chloroplastic (APS1) (Arabidopsis thaliana (Mouse-ear cress)).